The primary structure comprises 148 residues: Small ribosomal subunit protein bS6 (148 aa).

The interval 96 to 148 is disordered; sequence HEEGQSAMLTRRDDRRERDGDDRPRRREGGFDRGDRGDRSPRRPRDNEAGEGA.

This sequence belongs to the bacterial ribosomal protein bS6 family.

Binds together with bS18 to 16S ribosomal RNA. The chain is Small ribosomal subunit protein bS6 from Brucella suis (strain ATCC 23445 / NCTC 10510).